A 172-amino-acid polypeptide reads, in one-letter code: Co-chaperone protein HscB homolog (172 aa).

Positions 2–69 (NHFELFNLPV…DSRAAYLLAL (68 aa)) constitute a J domain.

It belongs to the HscB family. As to quaternary structure, interacts with HscA and stimulates its ATPase activity.

Its function is as follows. Co-chaperone involved in the maturation of iron-sulfur cluster-containing proteins. Seems to help targeting proteins to be folded toward HscA. This chain is Co-chaperone protein HscB homolog, found in Acinetobacter baumannii (strain SDF).